The following is a 165-amino-acid chain: MTVTLNRGSITSLMSSSQAVSTLQPVASELKTQLENKLKSESAEKTREVLWQQYYASNPPDHAVLEVLATPVREALLARFGQHQGSVVPAIDLPELRSVLQQFDSFGKRWEAILLQVLEGIKPNESQVGLPYLSELINKELMILLPSNSIVDSLLHNSHQIDMDT.

The protein belongs to the YopR family.

Its subcellular location is the secreted. Its function is as follows. May be involved in the regulation of the assembly of the type III secretion system (T3SS), also called injectisome, which is used to inject bacterial effector proteins into eukaryotic host cells. May control the secretion and/or polymerization of YscF/SctF, the principal component of the needle filament, thereby impacting the assembly of the T3SS. Involved in pathogenesis. This Yersinia pestis protein is Type 3 secretion system regulator YopR.